A 76-amino-acid chain; its full sequence is Sulfur carrier protein TusA (76 aa).

The active-site Cysteine persulfide intermediate is cysteine 15.

This sequence belongs to the sulfur carrier protein TusA family. Mostly a monomer, a small portion forms homodimer via intermolecular disulfide bonds. Tightly interacts with DsrEFH.

The protein resides in the cytoplasm. It participates in energy metabolism; sulfur metabolism. Sulfur carrier protein involved in sulfur trafficking for oxidative dissimilatory sulfur metabolism. Component of a sulfur relay system that starts with the sulfur-mobilizing rhodanese-like protein Rhd_2599 (Alvin_2599), which transfers the sulfur from a low-molecular-weight thiol, maybe glutathione, to the TusA protein (Alvin_2600); TusA serves as the sulfur donor for DsrEFH, which persulfurates DsrC; persulfurated DsrC very probably serves as a direct substrate for reverse-acting sulfite reductase, DsrAB. TusA seems to be not exclusively dedicated to sulfur oxidation and may have other important roles in the cell. Might also act as a sulfur mediator required for 2-thiouridine formation of tRNA. The protein is Sulfur carrier protein TusA of Allochromatium vinosum (strain ATCC 17899 / DSM 180 / NBRC 103801 / NCIMB 10441 / D) (Chromatium vinosum).